A 902-amino-acid chain; its full sequence is Aconitate hydratase A (902 aa).

3 residues coordinate [4Fe-4S] cluster: Cys-441, Cys-507, and Cys-510.

This sequence belongs to the aconitase/IPM isomerase family. Monomer. [4Fe-4S] cluster is required as a cofactor.

It catalyses the reaction citrate = D-threo-isocitrate. The enzyme catalyses (2S,3R)-3-hydroxybutane-1,2,3-tricarboxylate = 2-methyl-cis-aconitate + H2O. Its pathway is carbohydrate metabolism; tricarboxylic acid cycle; isocitrate from oxaloacetate: step 2/2. The protein operates within organic acid metabolism; propanoate degradation. Involved in the catabolism of short chain fatty acids (SCFA) via the tricarboxylic acid (TCA)(acetyl degradation route) and probably the 2-methylcitrate cycle I (propionate degradation route). Catalyzes the reversible isomerization of citrate to isocitrate via cis-aconitate. Also able to catalyze the hydration of cis-homoaconitate to yield (R)-homocitrate, but with a lower efficiency. Could catalyze the hydration of 2-methyl-cis-aconitate to yield (2R,3S)-2-methylisocitrate. The apo form of AcnA functions as a RNA-binding regulatory protein. This chain is Aconitate hydratase A (acoA), found in Thermus thermophilus (strain ATCC 27634 / DSM 579 / HB8).